The primary structure comprises 93 residues: Small ribosomal subunit protein uS19 (93 aa).

It belongs to the universal ribosomal protein uS19 family.

Its function is as follows. Protein S19 forms a complex with S13 that binds strongly to the 16S ribosomal RNA. This Frankia casuarinae (strain DSM 45818 / CECT 9043 / HFP020203 / CcI3) protein is Small ribosomal subunit protein uS19.